We begin with the raw amino-acid sequence, 115 residues long: U3-lycotoxin-Ls1b (115 aa).

A signal peptide spans 1–20; the sequence is MKFVLLFGVLLVTLFSYSSA. A propeptide spanning residues 21-44 is cleaved from the precursor; that stretch reads EMLDDFDQADEDELLSLIEKEEAR. Disulfide bonds link Cys-48–Cys-63, Cys-55–Cys-72, Cys-62–Cys-87, and Cys-74–Cys-85.

It belongs to the neurotoxin 19 (CSTX) family. 01 subfamily. As to expression, expressed by the venom gland.

It is found in the secreted. The polypeptide is U3-lycotoxin-Ls1b (Lycosa singoriensis (Wolf spider)).